Consider the following 489-residue polypeptide: Inositol-pentakisphosphate 2-kinase (489 aa).

The EXKPK motif motif lies at 136–140 (EIKPK).

The protein belongs to the IPK1 type 2 family.

Its subcellular location is the cytoplasm. The protein localises to the nucleus. The enzyme catalyses 1D-myo-inositol 1,3,4,5,6-pentakisphosphate + ATP = 1D-myo-inositol hexakisphosphate + ADP + H(+). Functionally, phosphorylates Ins(1,3,4,5,6)P5 at position 2 to form Ins(1,2,3,4,5,6)P6 (InsP6 or phytate). InsP6 is involved in many processes such as mRNA export, non-homologous end-joining, endocytosis, ion channel regulation. It also protects cells from TNF-alpha-induced apoptosis. The protein is Inositol-pentakisphosphate 2-kinase (Ippk) of Rattus norvegicus (Rat).